We begin with the raw amino-acid sequence, 35 residues long: Photosystem II reaction center protein M (35 aa).

A helical membrane pass occupies residues Ile-5 to Leu-25.

The protein belongs to the PsbM family. In terms of assembly, PSII is composed of 1 copy each of membrane proteins PsbA, PsbB, PsbC, PsbD, PsbE, PsbF, PsbH, PsbI, PsbJ, PsbK, PsbL, PsbM, PsbT, PsbX, PsbY, PsbZ, Psb30/Ycf12, at least 3 peripheral proteins of the oxygen-evolving complex and a large number of cofactors. It forms dimeric complexes.

The protein resides in the plastid. Its subcellular location is the chloroplast thylakoid membrane. Functionally, one of the components of the core complex of photosystem II (PSII). PSII is a light-driven water:plastoquinone oxidoreductase that uses light energy to abstract electrons from H(2)O, generating O(2) and a proton gradient subsequently used for ATP formation. It consists of a core antenna complex that captures photons, and an electron transfer chain that converts photonic excitation into a charge separation. This subunit is found at the monomer-monomer interface. The chain is Photosystem II reaction center protein M from Chara vulgaris (Common stonewort).